We begin with the raw amino-acid sequence, 126 residues long: 13 kDa ribonucleoprotein-associated protein (126 aa).

Belongs to the eukaryotic ribosomal protein eL8 family. In terms of assembly, component of the U3 snoRNP particle. Binds to the C'/D and B/C motifs in U3 snoRNA. Component of the 25S U4/U6.U5 tri-snRNP particle, a subcomplex of the spliceosome. Binds to the 5' stem-loop of U4 snRNA.

Its subcellular location is the nucleus. It is found in the nucleolus. In terms of biological role, common component of the spliceosome and rRNA processing machinery. In association with the spliceosomal U4/U6.U5 tri-snRNP particle, required for splicing of pre-mRNA. In association with box C/D snoRNPs, required for processing of pre-ribosomal RNA (rRNA) and site-specific 2'-O-methylation of substrate RNAs. Essential for the accumulation and stability of U4 snRNA, U6 snRNA, and box C/D snoRNAs. This is 13 kDa ribonucleoprotein-associated protein (SNU13) from Debaryomyces hansenii (strain ATCC 36239 / CBS 767 / BCRC 21394 / JCM 1990 / NBRC 0083 / IGC 2968) (Yeast).